Consider the following 421-residue polypeptide: Synaptotagmin-1 (421 aa).

The Vesicular portion of the chain corresponds to 1 to 57; the sequence is MVSASHPEALAAPVTTVATLVPHNATEPASPGEGKEDAFSKLKQKFMNELHKIPLPP. Asn-24 carries N-linked (GlcNAc...) asparagine glycosylation. A helical transmembrane segment spans residues 58 to 79; sequence WALIAIAIVAVLLVVTCCFCVC. 5 S-palmitoyl cysteine lipidation sites follow: Cys-74, Cys-75, Cys-77, Cys-79, and Cys-82. Over 80–421 the chain is Cytoplasmic; sequence KKCLFKKKNK…EVDAMLAVKK (342 aa). The segment at 112-141 is disordered; the sequence is TMKDQALKDDDAETGLTDGEEKEEPKEEEK. A compositionally biased stretch (acidic residues) spans 121–133; sequence DDAETGLTDGEEK. Residue Thr-128 is modified to Phosphothreonine. The phospholipid binding stretch occupies residues 135 to 381; the sequence is EPKEEEKLGK…AIGKVFVGYN (247 aa). One can recognise a C2 1 domain in the interval 141–260; the sequence is KLGKLQYSLD…DFGHVTEEWR (120 aa). The Ca(2+) site is built by Leu-171, Asp-172, and Asp-178. The residue at position 229 (Tyr-229) is a Phosphotyrosine. Ca(2+) contacts are provided by Asp-230, Phe-231, Asp-232, Ser-235, Lys-236, and Asp-238. Ser-264 is subject to Phosphoserine. Residues 272–405 form the C2 2 domain; sequence KLGDICFSLR…NPRRPIAQWH (134 aa). Asp-303 and Asp-309 together coordinate Ca(2+). Residues Ser-342 and Ser-344 each carry the phosphoserine modification. 3 residues coordinate Ca(2+): Asp-363, Asp-365, and Asp-371.

The protein belongs to the synaptotagmin family. As to quaternary structure, homotetramer. Heterodimer; heterodimerizes with SYT2 in presence of calcium. Interacts with SCAMP5. Interacts with STON2. Forms a complex with SV2B, syntaxin 1 and SNAP25. Interacts with SV2A, SV2B and SV2C. Interacts with RIMS1. Interacts with PRRT2. Interacts with DNAJC5 in a phosphorylation-dependent manner. Interacts (via N-terminus) with RAB3A. Interacts with SYT12. Interacts with calmodulin. Interacts with DNM1 (via C-terminal proline-rich domain (PRD)); this interaction facilitates vesicle fission during clathrin-mediated endocytosis (CME). In terms of assembly, (Microbial infection) Interacts with C.botulinum neurotoxin type B (BoNT/B, botB). Has lower affinity for BoNT/B than Syt2; mutating its residues to match those in Syt2 increases its affinity. (Microbial infection) Interacts with C.botulinum neurotoxin type G (BoNT/G, botG). Requires Ca(2+) as cofactor. In terms of processing, glycosylated. Expressed in the brain (at protein level). Predominantly expressed in rostral, phylogenetically younger brain regions, and in some endocrine tissues.

Its subcellular location is the cytoplasmic vesicle. It is found in the secretory vesicle membrane. The protein resides in the secretory vesicle. The protein localises to the synaptic vesicle membrane. It localises to the chromaffin granule membrane. Its subcellular location is the cytoplasm. In terms of biological role, calcium sensor that participates in triggering neurotransmitter release at the synapse. May have a regulatory role in the membrane interactions during trafficking of synaptic vesicles at the active zone of the synapse. It binds acidic phospholipids with a specificity that requires the presence of both an acidic head group and a diacyl backbone. A Ca(2+)-dependent interaction between synaptotagmin and putative receptors for activated protein kinase C has also been reported. It can bind to at least three additional proteins in a Ca(2+)-independent manner; these are neurexins, syntaxin and AP2. Plays a role in dendrite formation by melanocytes. Its function is as follows. (Microbial infection) Receptor for C.botulinum neurotoxin type B (BoNT/B, botB); interaction is improved in the presence of gangliosides. BoNT/B toxin binds to the membrane proximal vesicular domain of Syt1 (residues 32-51). (Microbial infection) Receptor for C.botulinum neurotoxin type G (BoNT/G, botG); unlike the case with BoNT/B, interaction is not improved in the presence of gangliosides. BoNT/G toxin binds to the vesicular domain of Syt1 (residues 32-53). The polypeptide is Synaptotagmin-1 (Rattus norvegicus (Rat)).